The primary structure comprises 346 residues: S-adenosylmethionine:tRNA ribosyltransferase-isomerase (346 aa).

The protein belongs to the QueA family. Monomer.

The protein resides in the cytoplasm. The catalysed reaction is 7-aminomethyl-7-carbaguanosine(34) in tRNA + S-adenosyl-L-methionine = epoxyqueuosine(34) in tRNA + adenine + L-methionine + 2 H(+). It participates in tRNA modification; tRNA-queuosine biosynthesis. Functionally, transfers and isomerizes the ribose moiety from AdoMet to the 7-aminomethyl group of 7-deazaguanine (preQ1-tRNA) to give epoxyqueuosine (oQ-tRNA). This Lysinibacillus sphaericus (strain C3-41) protein is S-adenosylmethionine:tRNA ribosyltransferase-isomerase.